The primary structure comprises 342 residues: Anthranilate phosphoribosyltransferase (342 aa).

5-phospho-alpha-D-ribose 1-diphosphate-binding positions include G81, 84 to 85 (GD), 91 to 94 (NVSS), 109 to 117 (KHGNRGVSS), and S121. G81 contacts anthranilate. Mg(2+) is bound at residue S93. N112 lines the anthranilate pocket. R167 is an anthranilate binding site. Residues D226 and E227 each contribute to the Mg(2+) site.

It belongs to the anthranilate phosphoribosyltransferase family. Homodimer. The cofactor is Mg(2+).

It catalyses the reaction N-(5-phospho-beta-D-ribosyl)anthranilate + diphosphate = 5-phospho-alpha-D-ribose 1-diphosphate + anthranilate. The protein operates within amino-acid biosynthesis; L-tryptophan biosynthesis; L-tryptophan from chorismate: step 2/5. In terms of biological role, catalyzes the transfer of the phosphoribosyl group of 5-phosphorylribose-1-pyrophosphate (PRPP) to anthranilate to yield N-(5'-phosphoribosyl)-anthranilate (PRA). The protein is Anthranilate phosphoribosyltransferase of Marinobacter nauticus (strain ATCC 700491 / DSM 11845 / VT8) (Marinobacter aquaeolei).